A 134-amino-acid chain; its full sequence is MIKKYEGCFLFRSEELEYKSALEEVKKQLVAFGAVDFVENSIGERALEYPVRKQLRGRYEIIEFKMASDNLRELEAQLKLIKNLLRYMILVKINRKVSVKKVKRRNFREYRDNRDIKEKEQPSESNVDADLKVN.

Over residues 113 to 122 (NRDIKEKEQP) the composition is skewed to basic and acidic residues. The disordered stretch occupies residues 113-134 (NRDIKEKEQPSESNVDADLKVN).

It belongs to the bacterial ribosomal protein bS6 family.

Binds together with bS18 to 16S ribosomal RNA. The sequence is that of Small ribosomal subunit protein bS6 from Borrelia duttonii (strain Ly).